A 433-amino-acid polypeptide reads, in one-letter code: Sensor protein RstB (433 aa).

Over 1–3 (MKK) the chain is Cytoplasmic. A helical membrane pass occupies residues 4–24 (LFIQFYLLLFVCFLVMSLLVG). Residues 25-135 (LVYKFTAERA…PYLYYLHQMR (111 aa)) lie on the Periplasmic side of the membrane. Residues 136 to 156 (LLDIALIAFIAISLAFPVFIW) form a helical membrane-spanning segment. Residues 157–433 (MRPHWQDMLK…WHNIPQFTSA (277 aa)) lie on the Cytoplasmic side of the membrane. The region spanning 158 to 210 (RPHWQDMLKLEAAAQRFGDGHLNERIHFDEGSSFERLGVAFNQMADNINALIA) is the HAMP domain. A Histidine kinase domain is found at 218 to 425 (GIAHELRTPL…RFSFSWPLWH (208 aa)). H276 is modified (phosphohistidine; by autocatalysis).

Post-translationally, autophosphorylated.

The protein localises to the cell inner membrane. The enzyme catalyses ATP + protein L-histidine = ADP + protein N-phospho-L-histidine.. Its function is as follows. Member of the two-component regulatory system RstB/RstA. RstB functions as a membrane-associated protein kinase that phosphorylates RstA. The polypeptide is Sensor protein RstB (rstB) (Escherichia coli (strain K12)).